Here is a 332-residue protein sequence, read N- to C-terminus: Adenosine receptor A2b (332 aa).

The Extracellular portion of the chain corresponds to 1–8 (MQLETQDA). A helical membrane pass occupies residues 9-33 (LYVALELVIAALAVAGNVLVCAAVG). At 34–43 (ASSALQTPTN) the chain is on the cytoplasmic side. Residues 44 to 67 (YFLVSLATADVAVGLFAIPFAITI) form a helical membrane-spanning segment. The Extracellular portion of the chain corresponds to 68–78 (SLGFCTDFHGC). A disulfide bond links C78 and C171. Residues 79–101 (LFLACFVLVLTQSSIFSLLAVAV) traverse the membrane as a helical segment. Over 102–121 (DRYLAIRVPLRYKGLVTGTR) the chain is Cytoplasmic. A helical transmembrane segment spans residues 122 to 144 (ARGIIAVLWVLAFGIGLTPFLGW). Over 145–178 (NSKDSATSNCTELGDGIANKSCCPVTCLFENVVP) the chain is Extracellular. N153 and N163 each carry an N-linked (GlcNAc...) asparagine glycan. E174 lines the adenosine pocket. The chain crosses the membrane as a helical span at residues 179–203 (MSYMVYFNFFGCVLPPLLIMLVIYI). Residues 204 to 235 (KIFMVACKQLQRMELMDHSRTTLQREIHAAKS) lie on the Cytoplasmic side of the membrane. Residues 236–259 (LAMIVGIFALCWLPVHAINCITLF) traverse the membrane as a helical segment. N254 contacts adenosine. The Extracellular portion of the chain corresponds to 260 to 267 (HPALAKDK). The helical transmembrane segment at 268 to 291 (PKWVMNVAILLSHANSVVNPIVYA) threads the bilayer. Residues S279 and H280 each contribute to the adenosine site. Over 292–332 (YRNRDFRYSFHKIISRYVLCQAETKGGSGQAGAQSTLSLGL) the chain is Cytoplasmic. The S-palmitoyl cysteine moiety is linked to residue C311.

This sequence belongs to the G-protein coupled receptor 1 family.

It is found in the cell membrane. Its function is as follows. Receptor for adenosine. The activity of this receptor is mediated by G proteins which activate adenylyl cyclase. This Mus musculus (Mouse) protein is Adenosine receptor A2b (Adora2b).